The sequence spans 173 residues: Monothiol glutaredoxin-S14, chloroplastic (173 aa).

A chloroplast-targeting transit peptide spans 1-63 (MALRSVKTPT…KLKPTKFRCS (63 aa)). One can recognise a Glutaredoxin domain in the interval 72–173 (KDTLEKLVNS…QEEVEKAMCS (102 aa)). Residue lysine 89 participates in glutathione binding. [2Fe-2S] cluster-binding residues include cysteine 97 and phenylalanine 99. An S-glutathionyl cysteine modification is found at cysteine 97. The segment at 97–100 (CGFS) is required for CAX1 activation. Glutathione is bound by residues arginine 126 and lysine 130. The required for CAX1 activation stretch occupies residues 133-137 (SNWPT). Glutathione-binding positions include phenylalanine 138 and 151 to 152 (CD).

This sequence belongs to the glutaredoxin family. CGFS subfamily. In terms of assembly, [2Fe-2S]-bridged holo-homodimer. Interacts with N-terminal part of CAX1 in yeast. Interacts in vitro with SUFE1, BOLA1, BOLA2 and BOLA4. Interacts in vivo only with SUFE1, BOLA1 and BOLA4. Interacts with SBP1. Highly expressed in leaves, at intermediate levels in stems and at lower levels in roots and flowers.

The protein resides in the plastid. It is found in the chloroplast. In terms of biological role, may only reduce GSH-thiol disulfides, but not protein disulfides (Potential). Probably involved in the regulation of the redox state of the BOLA proteins (Potential). May act as Fe-S cluster donors to Fe-S cluster-requiring proteins. May protect cells against protein oxidative damage. May regulate CAX cation transporters. The GRXS14-BOLA1 heterodimer binds a labile, oxygen sensitive Fe-S cluster. This is Monothiol glutaredoxin-S14, chloroplastic from Arabidopsis thaliana (Mouse-ear cress).